A 248-amino-acid polypeptide reads, in one-letter code: 3-deoxy-manno-octulosonate cytidylyltransferase (248 aa).

Belongs to the KdsB family.

The protein resides in the cytoplasm. It catalyses the reaction 3-deoxy-alpha-D-manno-oct-2-ulosonate + CTP = CMP-3-deoxy-beta-D-manno-octulosonate + diphosphate. It participates in nucleotide-sugar biosynthesis; CMP-3-deoxy-D-manno-octulosonate biosynthesis; CMP-3-deoxy-D-manno-octulosonate from 3-deoxy-D-manno-octulosonate and CTP: step 1/1. Its pathway is bacterial outer membrane biogenesis; lipopolysaccharide biosynthesis. Its function is as follows. Activates KDO (a required 8-carbon sugar) for incorporation into bacterial lipopolysaccharide in Gram-negative bacteria. This chain is 3-deoxy-manno-octulosonate cytidylyltransferase, found in Escherichia coli O6:H1 (strain CFT073 / ATCC 700928 / UPEC).